A 1377-amino-acid chain; its full sequence is Temperature-sensitive hemagglutinin tsh autotransporter (1377 aa).

Residues 1-52 form the signal peptide; that stretch reads MNRIYSLRYSAVARGFIAVSEFARKCVHKSVRRLCFPVLLLIPVLFSAGSLA. The region spanning 53 to 302 is the Peptidase S6 domain; sequence GTVNNELGYQ…AVIPLDFIGQ (250 aa). Catalysis depends on charge relay system residues His-125, Asp-153, and Ser-259. Residues 1111–1377 form the Autotransporter domain; sequence DINGEAGTWV…AINANIRYSF (267 aa).

In terms of processing, the C-terminus is blocked. Post-translationally, cleaved to release the mature protein from the outer membrane.

The protein localises to the periplasm. The protein resides in the secreted. It is found in the cell surface. It localises to the cell outer membrane. In terms of biological role, contributes to the development of lesions and deposition of fibrin in the avian air sacs. It can act both as an adhesin and as a serine protease. Agglutinates erythrocytes while in contact with the extracellular surface of the bacterial cells. Can adhere to purified hemoglobin and bind with great efficiency to extracellular matrix proteins. Cleaves casein and exhibits mucinolytic activity. In Escherichia coli, this protein is Temperature-sensitive hemagglutinin tsh autotransporter (tsh).